Consider the following 304-residue polypeptide: Pseudouridine-5'-phosphate glycosidase (304 aa).

The Proton donor role is filled by Glu25. The substrate site is built by Lys88 and Val108. Asp140 lines the Mn(2+) pocket. 142 to 144 (SAD) provides a ligand contact to substrate. Lys161 acts as the Nucleophile in catalysis.

The protein belongs to the pseudouridine-5'-phosphate glycosidase family. As to quaternary structure, homotrimer. It depends on Mn(2+) as a cofactor.

It carries out the reaction D-ribose 5-phosphate + uracil = psi-UMP + H2O. Catalyzes the reversible cleavage of pseudouridine 5'-phosphate (PsiMP) to ribose 5-phosphate and uracil. Functions biologically in the cleavage direction, as part of a pseudouridine degradation pathway. The chain is Pseudouridine-5'-phosphate glycosidase from Paracoccus denitrificans (strain Pd 1222).